We begin with the raw amino-acid sequence, 589 residues long: Putative sphingomyelin phosphodiesterase asm-3 (589 aa).

A signal peptide spans 1-17 (MLLGLLVLSLAFQGTLA). The Saposin B-type domain maps to 18-101 (VTECEECKSI…LMKNDCGDFV (84 aa)). Disulfide bonds link Cys21-Cys97, Cys24-Cys89, and Cys52-Cys63. Asn109 carries an N-linked (GlcNAc...) asparagine glycan. 2 residues coordinate Zn(2+): Asp139 and His141. Intrachain disulfides connect Cys154-Cys159 and Cys160-Cys188. Residue Asp217 coordinates Zn(2+). A glycan (N-linked (GlcNAc...) asparagine) is linked at Asn237. Residue Asn257 participates in Zn(2+) binding. Asn334 carries N-linked (GlcNAc...) asparagine glycosylation. 3 residues coordinate Zn(2+): His364, His398, and His400. Asn463 carries an N-linked (GlcNAc...) asparagine glycan. Disulfide bonds link Cys530–Cys535 and Cys541–Cys553. A disordered region spans residues 562-589 (KPEPKKNKYSARFATSNERRRGKEECKI). Residues 578–589 (NERRRGKEECKI) are compositionally biased toward basic and acidic residues.

This sequence belongs to the acid sphingomyelinase family. The cofactor is Zn(2+).

Its subcellular location is the secreted. It catalyses the reaction an N-(acyl)-sphingosylphosphocholine + H2O = an N-acyl-sphingoid base + phosphocholine + H(+). It carries out the reaction a sphingomyelin + H2O = phosphocholine + an N-acylsphing-4-enine + H(+). The enzyme catalyses an N-acyl-15-methylhexadecasphing-4-enine-1-phosphocholine + H2O = an N-acyl-15-methylhexadecasphing-4-enine + phosphocholine + H(+). It participates in lipid metabolism; sphingolipid metabolism. Functionally, converts sphingomyelin to ceramide (N-acyl-sphingoid base) and phosphocholine. C.elegans contain specific sphingoid bases, which are unique or different in structure compared to the sphingoid bases found in other animals. Two examples of these distinctive compounds are: 15-methylhexadecasphinganine and 15-methylhexadecasphing-4-enine. The chain is Putative sphingomyelin phosphodiesterase asm-3 (asm-3) from Caenorhabditis elegans.